Here is a 1188-residue protein sequence, read N- to C-terminus: Spermatogenesis-associated protein 31C1 (1188 aa).

A helical membrane pass occupies residues 23–43; sequence PWVLDIFLTLVFALGLFFLLL. Disordered stretches follow at residues 57-92, 121-249, 483-510, 530-567, 733-813, 934-1013, 1121-1143, and 1155-1188; these read PSPRKRKRHLVSQRHLVSQCPTGRRGRPRGRMKNHS, LEKG…LLTP, PGTSQAKGKPRPWQSSTSTGESSKEAQT, TPQNLSRGMESFPGKVLGATSEESERNLRKPLRSDSGS, MPER…PTVP, NMGH…PSIS, QQATLKNQSRPNRDRQIRDQQPL, and LRHPQLLLPKKAVSPVSPPQHRPKTPSASSHHHH. Composition is skewed to basic residues over residues 59–68 and 80–92; these read PRKRKRHLVS and RRGRPRGRMKNHS. Positions 138–154 are enriched in basic and acidic residues; the sequence is VGKRTPDGASRSSHEPM. Low complexity predominate over residues 191 to 207; that stretch reads SSLSASQPPEPSLLLER. Residues 210–241 show a composition bias toward pro residues; the sequence is PEPPALFPHPPHTPDPLACSPPPPKGFTPPPL. Over residues 495-510 the composition is skewed to polar residues; the sequence is WQSSTSTGESSKEAQT. Polar residues-rich tracts occupy residues 783–800 and 943–954; these read LKGSTQQSRSLGAQSSRA and PNCQGSCKSQSP. The segment covering 960–976 has biased composition (basic and acidic residues); that stretch reads HKRENSRKPNLEKHEEM. A compositionally biased stretch (polar residues) spans 1121 to 1130; sequence QQATLKNQSR.

This sequence belongs to the SPATA31 family.

The protein resides in the membrane. In terms of biological role, may play a role in spermatogenesis. This Homo sapiens (Human) protein is Spermatogenesis-associated protein 31C1 (SPATA31C1).